The following is a 385-amino-acid chain: uncharacterized protein (385 aa).

The protein belongs to the phage portal family. HK97 subfamily.

This is an uncharacterized protein from Rickettsia felis (strain ATCC VR-1525 / URRWXCal2) (Rickettsia azadi).